We begin with the raw amino-acid sequence, 52 residues long: MGSRKTALVKTRLMRALKRNREIPAWKRMMKEHKGEYNRARRHWRSKKLKIY.

This sequence belongs to the eukaryotic ribosomal protein eL39 family. In terms of assembly, interacts with YIH1.

In Encephalitozoon cuniculi (strain GB-M1) (Microsporidian parasite), this protein is Large ribosomal subunit protein eL39 (RPL39).